The primary structure comprises 585 residues: Zinc finger protein Eos (585 aa).

Disordered stretches follow at residues 1–43 and 68–98; these read MHTP…PDFL and EKEFLGAPVGPSVSTPNSQHSSPSRSLSANS. The segment covering 25–34 has biased composition (basic and acidic residues); that stretch reads QGKDNLERDP. Polar residues predominate over residues 79–98; that stretch reads SVSTPNSQHSSPSRSLSANS. Lysine 100 is covalently cross-linked (Glycyl lysine isopeptide (Lys-Gly) (interchain with G-Cter in SUMO2)). Serine 105 is subject to Phosphoserine. 4 C2H2-type zinc fingers span residues 159–181, 187–209, 215–237, and 248–271; these read LKCDVCGMVCIGPNVLMVHKRSH, FHCNQCGASFTQKGNLLRHIKLH, FKCPFCNYACRRRDALTGHLRTH, and YKCNYCGRSYKQQSTLEEHKERCH. The segment at 281–585 is interaction with FOXP3; sequence AQALAGQPGD…HIVRGEHKVG (305 aa). Lysine 335 is modified (N6-acetyllysine). The segment at 410–489 is disordered; that stretch reads PGRLELPGSR…QPPPTIVVGR (80 aa). Residues 425 to 429 carry the CTBP-binding motif PEDLA motif; that stretch reads PEDLA. Positions 475 to 484 are enriched in pro residues; sequence QGPPPQPPPT. A Glycyl lysine isopeptide (Lys-Gly) (interchain with G-Cter in SUMO2) cross-link involves residue lysine 500. 2 consecutive C2H2-type zinc fingers follow at residues 530–552 and 558–582; these read FKCEHCRILFLDHVMFTIHMGCH and FECNICGYHSQDRYEFSSHIVRGEH.

The protein belongs to the Ikaros C2H2-type zinc-finger protein family. As to quaternary structure, self-associates. Interacts with other family members; IKZF1, IKZF2, IKZF3 and IKZF5. Interacts with CTBP2. Interacts with SPI1, MITF, FOXP3 and CTBP1. In terms of tissue distribution, highly expressed in skeletal muscle, low levels of expression in heart, thymus, kidney, liver, and spleen. Expressed in the hematopoietic cell lines MOLT-4, NALM-6 and K-562. Highly expressed in THP-1 and M-07e cell lines, which have characteristics of myeloid and early megakaryocytic cells respectively.

The protein resides in the nucleus. Functionally, DNA-binding protein that binds to the 5'GGGAATRCC-3' Ikaros-binding sequence. Transcriptional repressor. Interacts with SPI1 and MITF to repress transcription of the CTSK and ACP5 promoters via recruitment of corepressors SIN3A and CTBP2. May be involved in the development of central and peripheral nervous systems. Essential for the inhibitory function of regulatory T-cells (Treg). Mediates FOXP3-mediated gene silencing in regulatory T-cells (Treg) via recruitment of corepressor CTBP1. This chain is Zinc finger protein Eos (IKZF4), found in Homo sapiens (Human).